Consider the following 344-residue polypeptide: MRRLTMTRPDDWHLHLRDGAAMKAVLPHTVRQFARAIIMPNLKPPVRSVADAASYRERILAAVPEGQQFEPLMTLYLTDNTSPEEIVAAKASQFVKAVKYYPAGATTNSDLGVTDLRRCDGVLAAMEQVDMPLLLHGEVTDGDIDVFDREKVFIEKHLIPLITRFPKLRVVFEHITTADAVKFVLSANNNVAATITPQHLLFSRNILFTGGIRPHFYCLPILKREDHRLALLQAATSGNPKFFLGTDSAPHSRYSKESSCGCAGCYSALHALELYAEAFESVDAIDQLEGFASFHGPDFYQLPRNTEQITLTKSPWRIPDELPFPESGLVPLRAGEEITWQLGE.

H13 and H15 together coordinate Zn(2+). Substrate is bound by residues 15-17 (HLR) and N41. K99, H136, and H174 together coordinate Zn(2+). K99 carries the post-translational modification N6-carboxylysine. H136 contacts substrate. L219 contacts substrate. D247 is a binding site for Zn(2+). The active site involves D247. Substrate-binding residues include H251 and A263.

The protein belongs to the metallo-dependent hydrolases superfamily. DHOase family. Class II DHOase subfamily. In terms of assembly, homodimer. It depends on Zn(2+) as a cofactor.

The enzyme catalyses (S)-dihydroorotate + H2O = N-carbamoyl-L-aspartate + H(+). It functions in the pathway pyrimidine metabolism; UMP biosynthesis via de novo pathway; (S)-dihydroorotate from bicarbonate: step 3/3. Its function is as follows. Catalyzes the reversible cyclization of carbamoyl aspartate to dihydroorotate. This Microcystis aeruginosa (strain NIES-843 / IAM M-2473) protein is Dihydroorotase.